The primary structure comprises 168 residues: Photosystem I assembly protein Ycf3 (168 aa).

TPR repeat units lie at residues A35–P68, S72–L105, and G120–N153.

The protein belongs to the Ycf3 family.

It localises to the plastid. It is found in the chloroplast thylakoid membrane. Its function is as follows. Essential for the assembly of the photosystem I (PSI) complex. May act as a chaperone-like factor to guide the assembly of the PSI subunits. The protein is Photosystem I assembly protein Ycf3 of Atropa belladonna (Belladonna).